The chain runs to 98 residues: Ferredoxin-like protein (98 aa).

To ferredoxins from P.putida and C.tartarivorum, ferredoxin I from A.vinelandii, ferredoxin II from D.desulfuricans.

Could be a 3Fe-4S cluster-containing protein. The chain is Ferredoxin-like protein (fixX) from Rhizobium leguminosarum bv. trifolii.